A 134-amino-acid chain; its full sequence is Small ribosomal subunit protein bS16 (134 aa).

The tract at residues 105 to 134 is disordered; it reads EAERRQKRLTAKTRRRQAKKAAEAAGSAEG. Over residues 109–123 the composition is skewed to basic residues; the sequence is RQKRLTAKTRRRQAK.

The protein belongs to the bacterial ribosomal protein bS16 family.

This chain is Small ribosomal subunit protein bS16, found in Chlorobaculum parvum (strain DSM 263 / NCIMB 8327) (Chlorobium vibrioforme subsp. thiosulfatophilum).